Reading from the N-terminus, the 357-residue chain is Putative DENN domain-containing protein 10 B (357 aa).

One can recognise a uDENN domain in the interval 1–140 (MAAAELADTQ…TKGICQSEEN (140 aa)). Residues 159–299 (IKDIVSQFGM…PEKSESQVIQ (141 aa)) enclose the cDENN domain. Residues 301 to 357 (IALKTREIFTNLAPFSEVSADGEKRVLNLEALKQKRFPPATENFLYHLAAAEQMLKI) form the dDENN domain.

It belongs to the DENND10 family.

It localises to the late endosome. May be a guanine nucleotide exchange factor (GEF). The sequence is that of Putative DENN domain-containing protein 10 B from Homo sapiens (Human).